Reading from the N-terminus, the 148-residue chain is MDTHNKGDSIIRFSVSLQQNLLDELDNRIIKNGYSSRSELVRDMIREKLVEDNWAEDNPNDESKIAVLVVIYDHHQRELNQRMIDIQHASGTHVLCTTHIHMDEHNCLETIILQGNSFEIQRLQLEIGGLRGVKFAKLTKAFSFEYDE.

Positions 88, 99, 101, and 107 each coordinate Ni(2+).

Belongs to the transcriptional regulatory CopG/NikR family. Requires Ni(2+) as cofactor.

Transcriptional regulator. This Helicobacter pylori (strain HPAG1) protein is Putative nickel-responsive regulator.